The following is a 240-amino-acid chain: Inhibitor of growth protein 5 (240 aa).

The segment at 115–165 is disordered; that stretch reads MDGSDFESTGARSLKKGRSQKEKRSSRGRGRRTSEEDTPKKKKHKSGSEFT. A Phosphoserine modification is found at serine 118. Arginine 126 carries the omega-N-methylarginine modification. The segment at 186–235 adopts a PHD-type zinc-finger fold; the sequence is PTYCLCHQVSYGEMIGCDNPDCPIEWFHFACVDLTTKPKGKWFCPRCVQE. The Zn(2+) site is built by cysteine 189, cysteine 191, cysteine 202, cysteine 207, histidine 213, cysteine 216, cysteine 229, and cysteine 232.

The protein belongs to the ING family. As to quaternary structure, component of the HBO1 complex composed of KAT7/HBO1, MEAF6, ING5, and one scaffold subunit: complexes containing BRPF scaffold (BRPF1, BRD1/BRPF2 or BRPF3) direct KAT7/HBO1 specificity towards H3K14ac, while complexes containing JADE scaffold (JADE1, JADE2 and JADE3) mediate acetylation of histone H4. Component of the MOZ/MORF complex composed at least of ING5, KAT6A, KAT6B, MEAF6 and one of BRPF1, BRD1/BRPF2 and BRPF3. Interacts with H3K4me3 and to a lesser extent with H3K4me2. Interacts with EP300 and p53/TP53. Interacts with INCA1.

The protein resides in the nucleus. Its subcellular location is the chromosome. Its function is as follows. Component of the HBO1 complex, which specifically mediates acetylation of histone H3 at 'Lys-14' (H3K14ac) and, to a lower extent, acetylation of histone H4. Component of the MOZ/MORF complex which has a histone H3 acetyltransferase activity. Through chromatin acetylation it may regulate DNA replication and may function as a transcriptional coactivator. Inhibits cell growth, induces a delay in S-phase progression and enhances Fas-induced apoptosis in an INCA1-dependent manner. The protein is Inhibitor of growth protein 5 (Ing5) of Mus musculus (Mouse).